Here is a 307-residue protein sequence, read N- to C-terminus: uncharacterized protein (307 aa).

Residues 11 to 68 (IRLRHLHTFVAVAQQGTLGRAAETLNLSQPALSKTLNELEQLTGARLFERGRQGAQLT) enclose the HTH lysR-type domain. A DNA-binding region (H-T-H motif) is located at residues 28–47 (LGRAAETLNLSQPALSKTLN).

Belongs to the LysR transcriptional regulatory family.

This is an uncharacterized protein from Escherichia coli (strain K12).